We begin with the raw amino-acid sequence, 395 residues long: Elongation factor Tu (395 aa).

Residues 10–204 (KPHVNIGTIG…TVDEYIPTPQ (195 aa)) enclose the tr-type G domain. The tract at residues 19–26 (GHVDHGKT) is G1. 19–26 (GHVDHGKT) lines the GTP pocket. Thr26 is a Mg(2+) binding site. The tract at residues 60 to 64 (GITIN) is G2. The G3 stretch occupies residues 81–84 (DAPG). GTP is bound by residues 81–85 (DAPGH) and 136–139 (NKCD). Positions 136–139 (NKCD) are G4. Residues 174–176 (SAL) are G5.

This sequence belongs to the TRAFAC class translation factor GTPase superfamily. Classic translation factor GTPase family. EF-Tu/EF-1A subfamily. As to quaternary structure, monomer.

It localises to the cytoplasm. It catalyses the reaction GTP + H2O = GDP + phosphate + H(+). GTP hydrolase that promotes the GTP-dependent binding of aminoacyl-tRNA to the A-site of ribosomes during protein biosynthesis. The sequence is that of Elongation factor Tu from Ligilactobacillus salivarius (strain UCC118) (Lactobacillus salivarius).